Reading from the N-terminus, the 366-residue chain is MSLYIGLMSGTSMDGIDAALLELPSNQLIHGITKQYSDDVRRNLDDLIIGNHLTLASICQLNTLIGREFAEAVRQLLIEIKVHPKEIQAIGSHGQTVCHDTSGNIPYTLQLGCGHTISSLTGITVVADFRTRDLVNGGQGAPFAPLYHQQIFSKVNESVAVVNIGGIANVTFIAKNQMTRGWDIGPGNCLMDAWIYKNKGALFDKNGVWASQGEVIHPLLEYLLQDPFFHLDSPKSIGKEYFSLSWLQKHLKPDYTPADIQATLLALTAHTIAETILNESGEIKQLYLCGGGAHNTHLKESLARLLPGITVKSIAELGISPDYLEAMMFAWLAAQTINQIPVNLASITGAKGIAILGAVYPIIKSY.

Position 10–17 (10–17 (GTSMDGID)) interacts with ATP.

The protein belongs to the anhydro-N-acetylmuramic acid kinase family.

The catalysed reaction is 1,6-anhydro-N-acetyl-beta-muramate + ATP + H2O = N-acetyl-D-muramate 6-phosphate + ADP + H(+). The protein operates within amino-sugar metabolism; 1,6-anhydro-N-acetylmuramate degradation. It functions in the pathway cell wall biogenesis; peptidoglycan recycling. In terms of biological role, catalyzes the specific phosphorylation of 1,6-anhydro-N-acetylmuramic acid (anhMurNAc) with the simultaneous cleavage of the 1,6-anhydro ring, generating MurNAc-6-P. Is required for the utilization of anhMurNAc either imported from the medium or derived from its own cell wall murein, and thus plays a role in cell wall recycling. This Legionella pneumophila (strain Paris) protein is Anhydro-N-acetylmuramic acid kinase.